The sequence spans 747 residues: Elongation factor G, mitochondrial (747 aa).

The N-terminal 32 residues, 1–32 (MTLITRVLNGNLPLRLSTLKAARQLQCGYSSH), are a transit peptide targeting the mitochondrion. Residues 42–319 (ERIRNIGISA…AVVDYLPNPG (278 aa)) enclose the tr-type G domain. GTP is bound by residues 51–58 (AHIDSGKT), 118–122 (DTPGH), and 172–175 (NKLD).

It belongs to the TRAFAC class translation factor GTPase superfamily. Classic translation factor GTPase family. EF-G/EF-2 subfamily.

The protein localises to the mitochondrion. Its pathway is protein biosynthesis; polypeptide chain elongation. In terms of biological role, mitochondrial GTPase that catalyzes the GTP-dependent ribosomal translocation step during translation elongation. During this step, the ribosome changes from the pre-translocational (PRE) to the post-translocational (POST) state as the newly formed A-site-bound peptidyl-tRNA and P-site-bound deacylated tRNA move to the P and E sites, respectively. Catalyzes the coordinated movement of the two tRNA molecules, the mRNA and conformational changes in the ribosome. Essential during development as it acts as a retrograde signal from mitochondria to the nucleus to slow down cell proliferation if mitochondrial energy output is low. The protein is Elongation factor G, mitochondrial of Drosophila mojavensis (Fruit fly).